The primary structure comprises 1273 residues: Ras-specific guanine nucleotide-releasing factor 1 (1273 aa).

Residues 22–129 (DGTRKGYLSK…WVAAIAHASY (108 aa)) form the PH 1 domain. One can recognise an IQ domain in the interval 204–229 (KKIKKVQSFLRGWLCRRKWKTIIQDY). Residues 240 to 426 (KRNQVVFSML…EELSRIMHDE (187 aa)) enclose the DH domain. The PH 2 domain occupies 467–584 (PMSEKGKITR…WTSDISQCVD (118 aa)). 2 positions are modified to phosphoserine; by PLK2: Ser-577 and Ser-626. Positions 644–761 (KVLQIRYASV…SRRRKLSLNI (118 aa)) constitute an N-terminal Ras-GEF domain. The interval 724 to 754 (YGEPPKSPRATRKFSSPPPLSITKTSSPSRR) is disordered. At Ser-758 the chain carries Phosphoserine. A phosphoserine; by PLK2 mark is found at Ser-779 and Ser-800. A disordered region spans residues 809–874 (TNKIPDEGDT…PKSVKNKNSS (66 aa)). Residues 842–854 (SDIDQNQSDDGDT) are compositionally biased toward acidic residues. Positions 855–867 (ETSPTKSPTTPKS) are enriched in low complexity. The 233-residue stretch at 1038 to 1270 (SALEIAEQLT…YESSLRIEPK (233 aa)) folds into the Ras-GEF domain.

In terms of assembly, homooligomer and heterooligomer with RASGRF2. Interacts with USP8, thereby regulating its stability. Phosphorylated by PLK2, leading to ubiquitination and degradation by the proteasome. In terms of processing, ubiquitinated and degraded following phosphorylation by PLK2. Post-translationally, phosphorylated by SRC and LCK. Phosphorylation by LCK increases its capacity to stimulate the GDP/GTP exchange on Ras, whereas its phosphorylation by SRC seems not to have an effect on stimulation activity.

In terms of biological role, promotes the exchange of Ras-bound GDP by GTP. The protein is Ras-specific guanine nucleotide-releasing factor 1 (RASGRF1) of Homo sapiens (Human).